The chain runs to 489 residues: Argininosuccinate lyase (489 aa).

Residues 1–20 (MSEPSAAVGQRPGGESAPAH) form a disordered region.

This sequence belongs to the lyase 1 family. Argininosuccinate lyase subfamily.

The protein resides in the cytoplasm. The catalysed reaction is 2-(N(omega)-L-arginino)succinate = fumarate + L-arginine. The protein operates within amino-acid biosynthesis; L-arginine biosynthesis; L-arginine from L-ornithine and carbamoyl phosphate: step 3/3. The polypeptide is Argininosuccinate lyase (Acidothermus cellulolyticus (strain ATCC 43068 / DSM 8971 / 11B)).